Here is a 765-residue protein sequence, read N- to C-terminus: Protein PAT1 homolog 1 (765 aa).

Disordered regions lie at residues Met-1–Gly-98, Gly-119–Pro-147, and Leu-210–Val-244. Residues Leu-7–Asn-30 are compositionally biased toward acidic residues. Residues Glu-45–Asp-59 are compositionally biased toward basic and acidic residues. The segment covering Ser-218 to Glu-227 has biased composition (basic and acidic residues). 2 positions are modified to phosphoserine: Ser-235 and Ser-236. Residues Ser-235–Val-244 are compositionally biased toward low complexity.

Belongs to the PAT1 family. As to quaternary structure, interacts with ribonucleoprotein complex components.

Its subcellular location is the cytoplasm. It is found in the P-body. The protein resides in the nucleus. It localises to the PML body. The protein localises to the nucleus speckle. In terms of biological role, RNA-binding protein involved in deadenylation-dependent decapping of mRNAs, leading to the degradation of mRNAs. Acts as a scaffold protein that connects deadenylation and decapping machinery. Required for cytoplasmic mRNA processing body (P-body) assembly. The chain is Protein PAT1 homolog 1 (patl1) from Danio rerio (Zebrafish).